The sequence spans 415 residues: Probable glucuronosyltransferase Os03g0287800 (415 aa).

At 1–25 (MGSSTDHGGAGGRGKKGSGSQLWKK) the chain is on the cytoplasmic side. A helical; Signal-anchor for type II membrane protein membrane pass occupies residues 26-43 (ALLHSSLCFVMGFFTGFA). Residues 44-415 (PSSVSDWTSA…GGRFLSGDFC (372 aa)) lie on the Lumenal side of the membrane. Residues Asn-78, Asn-165, Asn-257, and Asn-287 are each glycosylated (N-linked (GlcNAc...) asparagine).

It belongs to the glycosyltransferase 43 family.

It is found in the golgi apparatus membrane. In terms of biological role, involved in the synthesis of glucuronoxylan hemicellulose in secondary cell walls. This Oryza sativa subsp. japonica (Rice) protein is Probable glucuronosyltransferase Os03g0287800.